Consider the following 179-residue polypeptide: NADH-quinone oxidoreductase subunit B (179 aa).

The [4Fe-4S] cluster site is built by cysteine 35, cysteine 36, cysteine 100, and cysteine 129.

It belongs to the complex I 20 kDa subunit family. NDH-1 is composed of 14 different subunits. Subunits NuoB, C, D, E, F, and G constitute the peripheral sector of the complex. It depends on [4Fe-4S] cluster as a cofactor.

The protein resides in the cell inner membrane. It catalyses the reaction a quinone + NADH + 5 H(+)(in) = a quinol + NAD(+) + 4 H(+)(out). NDH-1 shuttles electrons from NADH, via FMN and iron-sulfur (Fe-S) centers, to quinones in the respiratory chain. Couples the redox reaction to proton translocation (for every two electrons transferred, four hydrogen ions are translocated across the cytoplasmic membrane), and thus conserves the redox energy in a proton gradient. The chain is NADH-quinone oxidoreductase subunit B from Aquifex aeolicus (strain VF5).